The primary structure comprises 221 residues: PKHD-type hydroxylase PMT9312_1262 (221 aa).

The region spanning 80–174 is the Fe2OG dioxygenase domain; the sequence is IIHGIMFTKS…RLVCVGWIES (95 aa). Histidine 98, aspartate 100, and histidine 155 together coordinate Fe cation. 2-oxoglutarate is bound at residue arginine 165.

Fe(2+) serves as cofactor. The cofactor is L-ascorbate.

The chain is PKHD-type hydroxylase PMT9312_1262 from Prochlorococcus marinus (strain MIT 9312).